The following is a 324-amino-acid chain: MMSQQDLPTLFYSGKSNSAVPIISESELQTITAEPWLEISKKGLQLEGLNFDRQGQLFLLDVFEGNIFKVNPETKEIKQPFVSHKANPAAIKIHKDGRLFVCYLGDFKSTGGIFAATENGDNIQDIIEDLSTTYCIDDMVFDSKGGFYFTDFRGYSTNPLGGVYYVAPDFRTVTPIIQNISVANGIALSTDEKVLWVTETTANRLHRIALEDDGVTIQPFGATIPYYFTGHEGPDSCCIDRDDNLYVAMYGQGRVLVFNKRGYPIGQILIPGRDEGHMLRSTHPQFIPGTNQLIICANDIEMGGGSMLYTVNGFAKGHQSFQFQ.

The Ca(2+) site is built by Glu47, Ser109, Gly111, Asp129, Thr132, Tyr134, Asp137, Asn184, Asp235, and Ser236. The active-site Proton donor is the Asp235.

The protein belongs to the SMP-30/CGR1 family. Ca(2+) serves as cofactor.

Its subcellular location is the cytoplasm. Its function is as follows. Exhibits lactonase activity. Acts in cells with perturbed membrane integrity and is possibly related to the membrane homeostasis. The polypeptide is Lactonase drp35 (drp35) (Staphylococcus aureus (strain bovine RF122 / ET3-1)).